Consider the following 406-residue polypeptide: 3-oxoacyl-[acyl-carrier-protein] synthase 1 (406 aa).

The Ketosynthase family 3 (KS3) domain maps to 1 to 403 (MKRAVITGLG…GTNATLVMRK (403 aa)). Active-site for beta-ketoacyl synthase activity residues include Cys163, His298, and His333.

Belongs to the thiolase-like superfamily. Beta-ketoacyl-ACP synthases family. As to quaternary structure, homodimer.

The protein localises to the cytoplasm. It carries out the reaction a fatty acyl-[ACP] + malonyl-[ACP] + H(+) = a 3-oxoacyl-[ACP] + holo-[ACP] + CO2. The enzyme catalyses (3Z)-decenoyl-[ACP] + malonyl-[ACP] + H(+) = 3-oxo-(5Z)-dodecenoyl-[ACP] + holo-[ACP] + CO2. Its pathway is lipid metabolism; fatty acid biosynthesis. Its function is as follows. Involved in the type II fatty acid elongation cycle. Catalyzes the elongation of a wide range of acyl-ACP by the addition of two carbons from malonyl-ACP to an acyl acceptor. Can also use unsaturated fatty acids. Catalyzes a key reaction in unsaturated fatty acid (UFA) synthesis, the elongation of the cis-3-decenoyl-ACP produced by FabA. This Escherichia coli O6:H1 (strain CFT073 / ATCC 700928 / UPEC) protein is 3-oxoacyl-[acyl-carrier-protein] synthase 1 (fabB).